The primary structure comprises 103 residues: SLC35A4 upstream open reading frame protein (103 aa).

Residues 62-84 (ASAVLGFAVGTCTGIYAAQAYAV) traverse the membrane as a helical segment.

It is found in the mitochondrion inner membrane. In terms of biological role, required to maintain cellular respiration. The polypeptide is SLC35A4 upstream open reading frame protein (Homo sapiens (Human)).